A 177-amino-acid polypeptide reads, in one-letter code: uncharacterized protein (177 aa).

A signal peptide spans 1–22 (MCGVVVVIVALVPADPLLPAFA). The next 3 membrane-spanning stretches (helical) occupy residues 31–51 (VFIP…TCVF), 94–114 (ISLM…LKFV), and 136–156 (LFPI…LLEI).

Its subcellular location is the membrane. This is an uncharacterized protein from Saccharomyces cerevisiae (strain ATCC 204508 / S288c) (Baker's yeast).